The primary structure comprises 131 residues: Large ribosomal subunit protein uL24 (131 aa).

It belongs to the universal ribosomal protein uL24 family. In terms of assembly, part of the 50S ribosomal subunit.

One of two assembly initiator proteins, it binds directly to the 5'-end of the 23S rRNA, where it nucleates assembly of the 50S subunit. Functionally, located at the polypeptide exit tunnel on the outside of the subunit. The polypeptide is Large ribosomal subunit protein uL24 (Korarchaeum cryptofilum (strain OPF8)).